The chain runs to 159 residues: Putative 4-hydroxy-4-methyl-2-oxoglutarate aldolase (159 aa).

Substrate contacts are provided by residues 74-77 (GDNL) and R96. D97 lines the a divalent metal cation pocket.

Belongs to the class II aldolase/RraA-like family. As to quaternary structure, homotrimer. The cofactor is a divalent metal cation.

The catalysed reaction is 4-hydroxy-4-methyl-2-oxoglutarate = 2 pyruvate. The enzyme catalyses oxaloacetate + H(+) = pyruvate + CO2. Functionally, catalyzes the aldol cleavage of 4-hydroxy-4-methyl-2-oxoglutarate (HMG) into 2 molecules of pyruvate. Also contains a secondary oxaloacetate (OAA) decarboxylase activity due to the common pyruvate enolate transition state formed following C-C bond cleavage in the retro-aldol and decarboxylation reactions. This chain is Putative 4-hydroxy-4-methyl-2-oxoglutarate aldolase, found in Bacillus cereus (strain ZK / E33L).